The primary structure comprises 332 residues: COP9 signalosome complex subunit 5 (332 aa).

One can recognise an MPN domain in the interval 54 to 191 (VKISAIALLK…IGAFRTYPQG (138 aa)). Zn(2+) is bound by residues H137, H139, and D150. A JAMM motif motif is present at residues 137–150 (HSHPGYGCWLSGID).

It belongs to the peptidase M67A family. CSN5 subfamily. As to quaternary structure, component of the CSN complex. The holocomplex is comprised of 8 subunits csn1-8. In the complex, it probably interacts directly with csn1, csn2, csn3, csn4, csn6 and csn8. A divalent metal cation is required as a cofactor.

It localises to the cytoplasm. The protein localises to the nucleus. Functionally, probable protease subunit of the COP9 signalosome complex (CSN), a complex involved in various cellular and developmental processes. The CSN complex is an essential regulator of the ubiquitin (Ubl) conjugation pathway by mediating the deneddylation of the cullin subunits of E3 ligasew complexes, leading to modify the Ubl ligase activity. In the complex, it probably acts as the catalytic center that mediates the cleavage of Nedd8 from cullins. Csn5 is essential for growth or survival. The protein is COP9 signalosome complex subunit 5 (csn5) of Dictyostelium discoideum (Social amoeba).